A 477-amino-acid polypeptide reads, in one-letter code: Glycogen synthase (477 aa).

An ADP-alpha-D-glucose-binding site is contributed by K15.

The protein belongs to the glycosyltransferase 1 family. Bacterial/plant glycogen synthase subfamily.

The catalysed reaction is [(1-&gt;4)-alpha-D-glucosyl](n) + ADP-alpha-D-glucose = [(1-&gt;4)-alpha-D-glucosyl](n+1) + ADP + H(+). Its pathway is glycan biosynthesis; glycogen biosynthesis. Its function is as follows. Synthesizes alpha-1,4-glucan chains using ADP-glucose. The sequence is that of Glycogen synthase from Shigella boydii serotype 4 (strain Sb227).